A 337-amino-acid polypeptide reads, in one-letter code: Eukaryotic translation initiation factor 3 subunit H (337 aa).

The MPN domain maps to 21–153 (VQCDGLAVMK…LKAYRLTPQA (133 aa)).

This sequence belongs to the eIF-3 subunit H family. As to quaternary structure, component of the eukaryotic translation initiation factor 3 (eIF-3) complex. The eIF-3 complex interacts with pix. Interacts with mxt.

Its subcellular location is the cytoplasm. Component of the eukaryotic translation initiation factor 3 (eIF-3) complex, which is involved in protein synthesis of a specialized repertoire of mRNAs and, together with other initiation factors, stimulates binding of mRNA and methionyl-tRNAi to the 40S ribosome. The eIF-3 complex specifically targets and initiates translation of a subset of mRNAs involved in cell proliferation. This Drosophila virilis (Fruit fly) protein is Eukaryotic translation initiation factor 3 subunit H.